Here is a 513-residue protein sequence, read N- to C-terminus: Ectonucleoside triphosphate diphosphohydrolase 1 (513 aa).

At methionine 1 to asparagine 16 the chain is on the cytoplasmic side. A helical transmembrane segment spans residues isoleucine 17–leucine 37. The Extracellular portion of the chain corresponds to threonine 38 to valine 481. Residue asparagine 73 is glycosylated (N-linked (GlcNAc...) asparagine). Glutamate 174 serves as the catalytic Proton acceptor. 2 N-linked (GlcNAc...) asparagine glycosylation sites follow: asparagine 227 and asparagine 245. Cystine bridges form between cysteine 255–cysteine 300 and cysteine 281–cysteine 327. 2 N-linked (GlcNAc...) asparagine glycosylation sites follow: asparagine 307 and asparagine 336. Cysteine 340 and cysteine 345 form a disulfide bridge. N-linked (GlcNAc...) asparagine glycosylation is present at asparagine 373. The cysteines at positions 393 and 416 are disulfide-linked. Asparagine 460 is a glycosylation site (N-linked (GlcNAc...) asparagine). Residues phenylalanine 482–phenylalanine 502 form a helical membrane-spanning segment. Topologically, residues histidine 503 to valine 513 are cytoplasmic.

It belongs to the GDA1/CD39 NTPase family. Homodimer; disulfide-linked. It depends on Ca(2+) as a cofactor. The cofactor is Mg(2+). N-glycosylated. In terms of processing, the N-terminus is blocked. Post-translationally, palmitoylated on Cys-13; which is required for caveola targeting.

It is found in the membrane. The protein localises to the caveola. The catalysed reaction is a ribonucleoside 5'-triphosphate + 2 H2O = a ribonucleoside 5'-phosphate + 2 phosphate + 2 H(+). It catalyses the reaction a ribonucleoside 5'-triphosphate + H2O = a ribonucleoside 5'-diphosphate + phosphate + H(+). It carries out the reaction a ribonucleoside 5'-diphosphate + H2O = a ribonucleoside 5'-phosphate + phosphate + H(+). The enzyme catalyses ATP + 2 H2O = AMP + 2 phosphate + 2 H(+). The catalysed reaction is ATP + H2O = ADP + phosphate + H(+). It catalyses the reaction ADP + H2O = AMP + phosphate + H(+). It carries out the reaction CTP + 2 H2O = CMP + 2 phosphate + 2 H(+). The enzyme catalyses CTP + H2O = CDP + phosphate + H(+). The catalysed reaction is CDP + H2O = CMP + phosphate + H(+). It catalyses the reaction GTP + 2 H2O = GMP + 2 phosphate + 2 H(+). It carries out the reaction GTP + H2O = GDP + phosphate + H(+). The enzyme catalyses GDP + H2O = GMP + phosphate + H(+). The catalysed reaction is ITP + 2 H2O = IMP + 2 phosphate + 2 H(+). It catalyses the reaction ITP + H2O = IDP + phosphate + H(+). It carries out the reaction IDP + H2O = IMP + phosphate + H(+). The enzyme catalyses UTP + 2 H2O = UMP + 2 phosphate + 2 H(+). The catalysed reaction is UTP + H2O = UDP + phosphate + H(+). It catalyses the reaction UDP + H2O = UMP + phosphate + H(+). Catalyzes the hydrolysis of both di- and triphosphate nucleotides (NDPs and NTPs) and hydrolyze NTPs to nucleotide monophosphates (NMPs) in two distinct successive phosphate-releasing steps, with NDPs as intermediates and participates in the regulation of extracellular levels of nucleotides. By hydrolyzing proinflammatory ATP and platelet-activating ADP to AMP, it blocks platelet aggregation and supports blood flow. The protein is Ectonucleoside triphosphate diphosphohydrolase 1 of Bos taurus (Bovine).